A 392-amino-acid chain; its full sequence is MATRRAAIAREVDNAVGAMRSKAQLNGRRAALGEIGNKVTVRAVKQPAKNSNTTSKTTRPVAKVSNVSVKPKAVTVTEAPSQVKEASPVPMDVSMKEEEELCQAFSEVLNHVVDIDAEDGGNPQLCSEYVVDIYNYLREREVQQSIKQRYLDGMEINERMRAILVDWLIQVNSRFQFLQETLYMGIAIMDRFLQVQPISRGKLQLVGVTSLLLASKYEEMYSPEVADFAYITDNAYTTSQIREMEMIILRELKFDLGRPLPLHFLRRASKACSADAEQHTLAKYLMELTLVDYEMVHFHPSEIAAAALCLAQKVLGVGSWGSTQHHYTGYTEEDLTPIIKHIAKNVTKVNQNRTKHVAVRNKYASSKLMKISTHPQLMSLVITELAASLTSQ.

Belongs to the cyclin family. Cyclin AB subfamily. In terms of assembly, interacts with the CDK1 protein kinase to form a serine/threonine kinase holoenzyme complex also known as maturation promoting factor (MPF). The cyclin subunit imparts substrate specificity to the complex.

Essential for the control of the cell cycle at the G2/M (mitosis) transition. The sequence is that of G2/mitotic-specific cyclin-B2 (CCNB2) from Rana japonica (Japanese reddish frog).